The primary structure comprises 354 residues: Uroporphyrinogen decarboxylase (354 aa).

Substrate is bound by residues 27 to 31 (RQAGR), Asp77, Tyr154, Thr209, and His327.

It belongs to the uroporphyrinogen decarboxylase family. In terms of assembly, homodimer.

The protein resides in the cytoplasm. The catalysed reaction is uroporphyrinogen III + 4 H(+) = coproporphyrinogen III + 4 CO2. It functions in the pathway porphyrin-containing compound metabolism; protoporphyrin-IX biosynthesis; coproporphyrinogen-III from 5-aminolevulinate: step 4/4. Catalyzes the decarboxylation of four acetate groups of uroporphyrinogen-III to yield coproporphyrinogen-III. The polypeptide is Uroporphyrinogen decarboxylase (Pseudomonas putida (strain W619)).